An 818-amino-acid polypeptide reads, in one-letter code: MESLSPGGPPGHPYQGEASTCWQLTVRVLEARNLRWADLLSEADPYVILQLSTAPGMKFKTKTLTDTSHPVWNEAFRFLIQSQVKNVLELSIYDEDSVTEDDICFKVLYDISEVLPGKLLRKTFSQSPQGEEELDVEFLMEETSDRPENLITNKVIVARELSCLDVHLDSTGSTAVVADQDKLELELVLKGSYEDTQTSFLGTASAFRFHYMAALETELSGRLRSSRSNGWNGDNSAGYLTVPLRPLTIGKEVTMDVPAPNAPGVRLQLKAEGCPEELAVHLGFNLCAEEQAFLSRRKQVVAKALKQALQLDRDLQEDEVPVVGIMATGGGARAMTSLYGHLLALQKLGLLDCVTYFSGISGSTWTMAHLYGDPEWSQRDLEGPIRYAREHLAKSKLEVFSPERLASYRRELELRAEQGHPTTFVDLWALVLESMLHGQVMDQKLSGQRAALERGQNPLPLYLSLNVKENNLETLDFKEWVEFSPYEVGFLKYGAFVPPELFGSEFFMGRLMRRIPEPRICFLEAIWSNIFSLNLLDAWYDLTSSGESWKQHIKDKTRSLEKEPLTTSGTSSRLEASWLQPGTALAQAFKGFLTGRPLHQRSPNFLQGLQLHQDYCSHKDFSTWADYQLDSMPSQLTPKEPRLCLVDAAYFINTSSPSMFRPGRRLDLILSFDYSLSAPFEALQQTELYCRARGLPFPRVEPSPQDQHQPRECHLFSDPACPEAPILLHFPLVNASFKDHSAPGVQRSPAELQGGQVDLTGATCPYTLSNMTYKEEDFERLLRLSDYNVQTSQGAILQALRTALKHRTLEARPPRAQT.

One can recognise a C2 domain in the interval 5–124 (SPGGPPGHPY…LPGKLLRKTF (120 aa)). Aspartate 38, aspartate 44, aspartate 94, aspartate 96, and aspartate 102 together coordinate Ca(2+). The PLA2c domain maps to 273–818 (GCPEELAVHL…LEARPPRAQT (546 aa)). 330–331 (GG) contributes to the substrate binding site. Serine 361 serves as the catalytic Nucleophile. Aspartate 647 acts as the Proton acceptor in catalysis.

It depends on Ca(2+) as a cofactor. Expressed in stratified squamous epithelia, such as those in skin and cervix, but not in other tissues. Strongly expressed in the upper spinous layer of the psoriatic epidermis, expressed weakly and discontinuously in atopic dermatitis and mycosis fungoides, and not detected in the epidermis of normal skin.

The protein resides in the cytoplasm. The protein localises to the cytosol. Its subcellular location is the membrane. It catalyses the reaction a 1,2-diacyl-sn-glycero-3-phosphocholine + H2O = a 1-acyl-sn-glycero-3-phosphocholine + a fatty acid + H(+). It carries out the reaction 1-hexadecanoyl-2-(5Z,8Z,11Z,14Z-eicosatetraenoyl)-sn-glycero-3-phosphocholine + H2O = 1-hexadecanoyl-sn-glycero-3-phosphocholine + (5Z,8Z,11Z,14Z)-eicosatetraenoate + H(+). The enzyme catalyses 1-hexadecanoyl-2-(9Z,12Z-octadecadienoyl)-sn-glycero-3-phosphocholine + H2O = (9Z,12Z)-octadecadienoate + 1-hexadecanoyl-sn-glycero-3-phosphocholine + H(+). The catalysed reaction is 1-hexadecanoyl-2-(9Z-octadecenoyl)-sn-glycero-3-phosphocholine + H2O = 1-hexadecanoyl-sn-glycero-3-phosphocholine + (9Z)-octadecenoate + H(+). It catalyses the reaction 1-hexadecanoyl-2-(5Z,8Z,11Z,14Z-eicosatetraenoyl)-sn-glycero-3-phosphoethanolamine + H2O = 1-hexadecanoyl-sn-glycero-3-phosphoethanolamine + (5Z,8Z,11Z,14Z)-eicosatetraenoate + H(+). It carries out the reaction 1-hexadecanoyl-2-(9Z,12Z-octadecadienoyl)-sn-glycero-3-phosphoethanolamine + H2O = 1-hexadecanoyl-sn-glycero-3-phosphoethanolamine + (9Z,12Z)-octadecadienoate + H(+). The protein operates within lipid metabolism; fatty acid metabolism. Stimulated by cytosolic Ca(2+). Calcium-dependent phospholipase A2 that selectively hydrolyzes glycerophospholipids in the sn-2 position. Has a preference for linoleic acid at the sn-2 position. In Homo sapiens (Human), this protein is Cytosolic phospholipase A2 delta.